Consider the following 531-residue polypeptide: Histone-arginine methyltransferase CARMER (531 aa).

The 310-residue stretch at 141-450 (ASQYFQFYGY…QSYDVTIDLH (310 aa)) folds into the SAM-dependent MTase PRMT-type domain. S-adenosyl-L-methionine is bound by residues Gln-154, Arg-163, Gly-187, Glu-209, Glu-238, and Thr-266. Position 501 is an asymmetric dimethylarginine; by autocatalysis (Arg-501).

Belongs to the class I-like SAM-binding methyltransferase superfamily. Protein arginine N-methyltransferase family. Homodimer. Post-translationally, the dimethylated protein is the major form.

Its subcellular location is the cytoplasm. The protein localises to the nucleus. The enzyme catalyses L-arginyl-[protein] + 2 S-adenosyl-L-methionine = N(omega),N(omega)-dimethyl-L-arginyl-[protein] + 2 S-adenosyl-L-homocysteine + 2 H(+). Its function is as follows. Methylates (mono- and asymmetric dimethylation) the guanidino nitrogens of arginyl residues in proteins. May methylate histone H3 at 'Arg-17' and activate transcription via chromatin remodeling. The protein is Histone-arginine methyltransferase CARMER (Art4) of Drosophila persimilis (Fruit fly).